A 506-amino-acid chain; its full sequence is Anaerobic nitric oxide reductase transcription regulator NorR (506 aa).

At Asp-57 the chain carries 4-aspartylphosphate. A Sigma-54 factor interaction domain is found at 187-416 (MIGLSPAMTQ…LEHAIHRAVV (230 aa)). ATP contacts are provided by residues 215 to 222 (GETGTGKE) and 278 to 287 (ADNGTLFLDE). The segment at residues 481 to 500 (WAASARALETDVANLHRLAK) is a DNA-binding region (H-T-H motif).

It functions in the pathway nitrogen metabolism; nitric oxide reduction. Its function is as follows. Required for the expression of anaerobic nitric oxide (NO) reductase, acts as a transcriptional activator for at least the norVW operon. Activation also requires sigma-54. The chain is Anaerobic nitric oxide reductase transcription regulator NorR from Salmonella arizonae (strain ATCC BAA-731 / CDC346-86 / RSK2980).